The sequence spans 389 residues: Putative F-box protein At1g47790 (389 aa).

Residues Ser-19–Tyr-65 enclose the F-box domain.

The chain is Putative F-box protein At1g47790 from Arabidopsis thaliana (Mouse-ear cress).